Here is a 449-residue protein sequence, read N- to C-terminus: Tubulin alpha chain (449 aa).

8 residues coordinate GTP: glutamine 11, glutamate 71, serine 140, glycine 144, threonine 145, threonine 179, asparagine 206, and asparagine 228. Residue glutamate 71 participates in Mg(2+) binding. The active site involves glutamate 254.

The protein belongs to the tubulin family. In terms of assembly, dimer of alpha and beta chains. A typical microtubule is a hollow water-filled tube with an outer diameter of 25 nm and an inner diameter of 15 nM. Alpha-beta heterodimers associate head-to-tail to form protofilaments running lengthwise along the microtubule wall with the beta-tubulin subunit facing the microtubule plus end conferring a structural polarity. Microtubules usually have 13 protofilaments but different protofilament numbers can be found in some organisms and specialized cells. Mg(2+) serves as cofactor.

It is found in the cytoplasm. Its subcellular location is the cytoskeleton. The catalysed reaction is GTP + H2O = GDP + phosphate + H(+). Functionally, tubulin is the major constituent of microtubules, a cylinder consisting of laterally associated linear protofilaments composed of alpha- and beta-tubulin heterodimers. Microtubules grow by the addition of GTP-tubulin dimers to the microtubule end, where a stabilizing cap forms. Below the cap, tubulin dimers are in GDP-bound state, owing to GTPase activity of alpha-tubulin. The chain is Tubulin alpha chain (TUB1) from Pneumocystis carinii.